The chain runs to 70 residues: Large ribosomal subunit protein eL38 (70 aa).

Residue lysine 4 forms a Glycyl lysine isopeptide (Lys-Gly) (interchain with G-Cter in SUMO2) linkage. Lysine 9 is subject to N6-acetyllysine; alternate. Lysine 9 is covalently cross-linked (Glycyl lysine isopeptide (Lys-Gly) (interchain with G-Cter in SUMO2); alternate). At lysine 67 the chain carries N6-acetyllysine.

The protein belongs to the eukaryotic ribosomal protein eL38 family. In terms of assembly, component of the large ribosomal subunit.

The protein localises to the cytoplasm. In terms of biological role, component of the large ribosomal subunit. The ribosome is a large ribonucleoprotein complex responsible for the synthesis of proteins in the cell. This Homo sapiens (Human) protein is Large ribosomal subunit protein eL38 (RPL38).